The sequence spans 244 residues: 1-(5-phosphoribosyl)-5-[(5-phosphoribosylamino)methylideneamino] imidazole-4-carboxamide isomerase (244 aa).

Residue D8 is the Proton acceptor of the active site. D130 serves as the catalytic Proton donor.

It belongs to the HisA/HisF family.

Its subcellular location is the cytoplasm. It catalyses the reaction 1-(5-phospho-beta-D-ribosyl)-5-[(5-phospho-beta-D-ribosylamino)methylideneamino]imidazole-4-carboxamide = 5-[(5-phospho-1-deoxy-D-ribulos-1-ylimino)methylamino]-1-(5-phospho-beta-D-ribosyl)imidazole-4-carboxamide. It participates in amino-acid biosynthesis; L-histidine biosynthesis; L-histidine from 5-phospho-alpha-D-ribose 1-diphosphate: step 4/9. The protein is 1-(5-phosphoribosyl)-5-[(5-phosphoribosylamino)methylideneamino] imidazole-4-carboxamide isomerase of Hahella chejuensis (strain KCTC 2396).